The chain runs to 228 residues: 7-cyano-7-deazaguanine synthase (228 aa).

Leu-9–Leu-19 is a binding site for ATP. Zn(2+)-binding residues include Cys-193, Cys-203, Cys-206, and Cys-209.

It belongs to the QueC family. Zn(2+) is required as a cofactor.

The enzyme catalyses 7-carboxy-7-deazaguanine + NH4(+) + ATP = 7-cyano-7-deazaguanine + ADP + phosphate + H2O + H(+). It functions in the pathway purine metabolism; 7-cyano-7-deazaguanine biosynthesis. In terms of biological role, catalyzes the ATP-dependent conversion of 7-carboxy-7-deazaguanine (CDG) to 7-cyano-7-deazaguanine (preQ(0)). This chain is 7-cyano-7-deazaguanine synthase, found in Rickettsia conorii (strain ATCC VR-613 / Malish 7).